The primary structure comprises 196 residues: Glycerol-3-phosphate acyltransferase (196 aa).

A run of 5 helical transmembrane segments spans residues Met-1–Gly-21, Ile-55–Thr-75, Pro-81–Phe-101, Ala-118–Phe-138, and Tyr-140–Gln-160.

It belongs to the PlsY family. Probably interacts with PlsX.

It is found in the cell inner membrane. The catalysed reaction is an acyl phosphate + sn-glycerol 3-phosphate = a 1-acyl-sn-glycero-3-phosphate + phosphate. Its pathway is lipid metabolism; phospholipid metabolism. Catalyzes the transfer of an acyl group from acyl-phosphate (acyl-PO(4)) to glycerol-3-phosphate (G3P) to form lysophosphatidic acid (LPA). This enzyme utilizes acyl-phosphate as fatty acyl donor, but not acyl-CoA or acyl-ACP. This is Glycerol-3-phosphate acyltransferase from Blochmanniella floridana.